We begin with the raw amino-acid sequence, 621 residues long: MVKESDILVIGGGHAGIEASLIAAKMGARVHLITMLIDTIGLASCNPAIGGLGKGHLTKEVDVLGGAMGIITDNSGLQYRVLNASKGPAVRGTRAQIDMDTYRIFARNLVLNTPNLSVSQEMTESLIIENDEMVGVTTNINNTYKAKKVIITTGTFLKGVVHIGEHQNQNGRFGENASNSLALNLRELGFRVERLKTGTCPRVAGNSIDFEGLEEHFGDTNPPYFSYKTKDFNPTQLSCFITYTNPITHQIIRDNFHRAPLFSGQIEGIGPRYCPSIEDKINRFSEKERHQLFLEPQTIHKSEYYINGLSTSLPLDVQEKVIHSIKGLENALITRYGYAIEYDFIQPTELTHTLETKKIKGLYLAGQINGTTGYEEAAAQGLMAGINAVLALKNQDPFILKRNEAYIGVLIDDLVTKGTNEPYRMFTSRAEYRLLLREDNTLFRLGEHAYRLGLMEEDFYKGLKKDQQEIQDNLKRLKECVLTPSKEVLKRLNELDENPINDKVDGVSLLARDSFNLEKMRSFFSFLTPLNERVLEQIKIECKYNIYIEKQHENIAKMDSMLKVSIPKGFVFKGIPGLSLEAVEKLEKFRPKSLFEASEISGITPANLDVLHLYIHLRKNS.

11-16 is a binding site for FAD; it reads GGGHAG. 270–284 contributes to the NAD(+) binding site; that stretch reads GPRYCPSIEDKINRF.

Belongs to the MnmG family. In terms of assembly, homodimer. Heterotetramer of two MnmE and two MnmG subunits. FAD serves as cofactor.

The protein resides in the cytoplasm. In terms of biological role, NAD-binding protein involved in the addition of a carboxymethylaminomethyl (cmnm) group at the wobble position (U34) of certain tRNAs, forming tRNA-cmnm(5)s(2)U34. The sequence is that of tRNA uridine 5-carboxymethylaminomethyl modification enzyme MnmG from Helicobacter pylori (strain Shi470).